A 185-amino-acid polypeptide reads, in one-letter code: MRHKLMTSTIASLMFVAAAAVAADPTPVSVVGGTIHFEGKLVNAACAVSTKSADQTVTLGQYRTASFTAIGNTTAQVPFSIVLNDCDPKVAATAAVAFSGQADNTTPNLLAVSSADNSTTATGVGIEILDNTSSPLKPDGATFSAKQSLVEGTNTLRFTARYKATAAATTPGQANADATFIMKYE.

An N-terminal signal peptide occupies residues 1-22 (MRHKLMTSTIASLMFVAAAAVA). Cys-46 and Cys-86 are oxidised to a cystine.

It belongs to the fimbrial protein family.

The protein resides in the fimbrium. In Salmonella typhimurium, this protein is Fimbrial subunit type 1.